A 634-amino-acid polypeptide reads, in one-letter code: Extracellular metalloproteinase MEP (634 aa).

The first 18 residues, 1-18, serve as a signal peptide directing secretion; the sequence is MRGLLLAGALALPASVFA. A propeptide spanning residues 19–245 is cleaved from the precursor; sequence HPAHQSYGLN…IHGVVDYVAE (227 aa). Zn(2+) is bound at residue His429. Glu430 is an active-site residue. Residue His433 coordinates Zn(2+).

This sequence belongs to the peptidase M36 family. It depends on Zn(2+) as a cofactor.

It is found in the secreted. Its function is as follows. Secreted metalloproteinase that allows assimilation of proteinaceous substrates and probably acts as a virulence factor. This is Extracellular metalloproteinase MEP (MEP) from Neosartorya fischeri (strain ATCC 1020 / DSM 3700 / CBS 544.65 / FGSC A1164 / JCM 1740 / NRRL 181 / WB 181) (Aspergillus fischerianus).